Reading from the N-terminus, the 660-residue chain is RalBP1-associated Eps domain-containing protein 2 (660 aa).

In terms of domain architecture, EH 1 spans 34-147 (EQQCYSELFA…RFMMSKNDGE (114 aa)). Positions 169–208 (EKNSFKRMDDEDKQQETQSPTMSPLASPPSSPPHYQRVPL) are disordered. Ser254 is modified (phosphoserine). In terms of domain architecture, EH 2 spans 282-373 (QREYYVNQFR…LQPEYLQAAF (92 aa)). Residues 315–350 (LSIPELSYIWELSDADCDGALTLPEFCAAFHLIVAR) form the EF-hand domain. Residues Asp328, Asp330, Asp332, and Glu339 each contribute to the Ca(2+) site. A disordered region spans residues 433 to 616 (NEALPKDVSE…KQKKAIQTAI (184 aa)). At Thr479 the chain carries Phosphothreonine. Residue Ser493 is modified to Phosphoserine. Residues 512 to 523 (LPPPPALPPRPC) show a composition bias toward pro residues. The tract at residues 514–660 (PPPALPPRPC…LEQLRPVTVL (147 aa)) is interaction with RALBP1. Positions 561–660 (PPSKPIRRKF…LEQLRPVTVL (100 aa)) are interaction with ASAP1. Positions 582 to 594 (PSTAASGPASAAT) are enriched in low complexity. The stretch at 601–657 (VQKQSSKQKKAIQTAIRKNKEANAVLARLNSELQQQLKEVHQERIALENQLEQLRPV) forms a coiled coil.

Interacts with EPN1; the interaction is direct. Interacts with EPS15; the interaction is direct. Interacts with EPS15L1. Interacts with RALBP1; can form a ternary complex with activated Ral (RALA or RALB). Interacts with ASAP1; the interaction is direct and this complex can bind paxillin. Also forms a ternary complex with RALBP1 and ASAP1. Interacts with GRB2. Tyrosine-phosphorylated upon stimulation of cells with EGF. Phosphorylation on Tyr-residues induces its association with the EGF receptor probably indirectly through an adapter like GRB2. Expressed at high levels in the cerebrum, cerebellum, lung, kidney, and testis. Weakly expressed in the kidney. Isoform 2 is down-regulated during progression of prostate cancer.

It localises to the cytoplasm. In terms of biological role, involved in ligand-dependent receptor mediated endocytosis of the EGF and insulin receptors as part of the Ral signaling pathway. By controlling growth factor receptors endocytosis may regulate cell survival. Through ASAP1 may regulate cell adhesion and migration. The sequence is that of RalBP1-associated Eps domain-containing protein 2 (REPS2) from Homo sapiens (Human).